We begin with the raw amino-acid sequence, 1667 residues long: Myomesin-1 (1667 aa).

A phosphoserine mark is found at Ser124 and Ser142. Over residues 192–210 the composition is skewed to low complexity; that stretch reads SKQSTASKQSATSKRTTST. The tract at residues 192 to 217 is disordered; it reads SKQSTASKQSATSKRTTSTLQREETF. Ig-like C2-type domains are found at residues 258-349 and 376-478; these read PEFI…ASVV and PYGY…AYVF. 3 Fibronectin type-III domains span residues 492–587, 620–714, and 721–814; these read APLD…ALDP, PPTD…VVGD, and APGK…VKAA. Positions 818–915 are disordered; that stretch reads GVSPDVWPQL…PKKKKDPVAV (98 aa). Residues Ser863 and Ser867 each carry the phosphoserine modification. Low complexity predominate over residues 885-894; sequence EPLSSPPQEA. 2 Fibronectin type-III domains span residues 918 to 1016 and 1023 to 1122; these read APYD…CEEW and PPHS…TRPG. The residue at position 1036 (Ser1036) is a Phosphoserine. 3 consecutive Ig-like C2-type domains span residues 1114 to 1212, 1340 to 1426, and 1555 to 1644; these read PVVA…EEMK, PHFA…LKLV, and RVLG…FTVS.

Homodimer. Interacts with TTN/titin and PNKD. Ubiquitously expressed in all striated muscles. Expressed in all fiber types.

It is found in the cytoplasm. It localises to the myofibril. The protein resides in the sarcomere. The protein localises to the m line. Its function is as follows. May link the intermediate filament cytoskeleton to the M-disk of the myofibrils in striated muscle. May also contact myosin filaments. Also binds beta-integrins. This chain is Myomesin-1 (Myom1), found in Mus musculus (Mouse).